Here is a 275-residue protein sequence, read N- to C-terminus: N-acetyltransferase YodP (275 aa).

An N-acetyltransferase domain is found at Phe125–Trp271.

Belongs to the acetyltransferase family.

The enzyme catalyses (3S)-3,6-diaminohexanoate + acetyl-CoA = (3S)-6-acetamido-3-aminohexanoate + CoA + H(+). Its function is as follows. In vitro, is able to catalyze the acetylation of beta-lysine to N6-acetyl-beta-lysine, an archaeal osmolyte produced by methanogenic archaea. Its physiological function has not yet been elucidated. This Bacillus subtilis (strain 168) protein is N-acetyltransferase YodP (yodP).